Reading from the N-terminus, the 306-residue chain is Methylated RNA-binding protein 1 (306 aa).

The YTH domain occupies 155 to 290 (SRFFVIKSSS…SIGISIINLF (136 aa)). RNA contacts are provided by residues 161-163 (KSS), Asn207, and Trp231.

Its function is as follows. RNA-binding protein that acts as a post-transcriptional regulator of phosphate metabolism by binding to the 3'-UTR region of PHO4 mRNA, decreasing its stability. Acts by recognizing and binding N6-methyladenosine (m6A)-containing RNAs, a modification present at internal sites of mRNAs and some non-coding RNAs. This is Methylated RNA-binding protein 1 from Saccharomyces cerevisiae (strain ATCC 204508 / S288c) (Baker's yeast).